Reading from the N-terminus, the 121-residue chain is Large ribosomal subunit protein bL20 (121 aa).

It belongs to the bacterial ribosomal protein bL20 family.

Functionally, binds directly to 23S ribosomal RNA and is necessary for the in vitro assembly process of the 50S ribosomal subunit. It is not involved in the protein synthesizing functions of that subunit. The chain is Large ribosomal subunit protein bL20 from Petrotoga mobilis (strain DSM 10674 / SJ95).